A 178-amino-acid polypeptide reads, in one-letter code: Ribosome maturation factor RimM (178 aa).

Positions 98 to 178 (DGEYYWNQLE…RILVDWDPEF (81 aa)) constitute a PRC barrel domain.

It belongs to the RimM family. As to quaternary structure, binds ribosomal protein uS19.

It localises to the cytoplasm. Its function is as follows. An accessory protein needed during the final step in the assembly of 30S ribosomal subunit, possibly for assembly of the head region. Essential for efficient processing of 16S rRNA. May be needed both before and after RbfA during the maturation of 16S rRNA. It has affinity for free ribosomal 30S subunits but not for 70S ribosomes. The chain is Ribosome maturation factor RimM from Cellvibrio japonicus (strain Ueda107) (Pseudomonas fluorescens subsp. cellulosa).